The following is a 243-amino-acid chain: Phosphoribosyl isomerase A (243 aa).

Aspartate 10 acts as the Proton acceptor in catalysis. Aspartate 129 serves as the catalytic Proton donor.

Belongs to the HisA/HisF family.

Its subcellular location is the cytoplasm. The catalysed reaction is 1-(5-phospho-beta-D-ribosyl)-5-[(5-phospho-beta-D-ribosylamino)methylideneamino]imidazole-4-carboxamide = 5-[(5-phospho-1-deoxy-D-ribulos-1-ylimino)methylamino]-1-(5-phospho-beta-D-ribosyl)imidazole-4-carboxamide. It carries out the reaction N-(5-phospho-beta-D-ribosyl)anthranilate = 1-(2-carboxyphenylamino)-1-deoxy-D-ribulose 5-phosphate. The protein operates within amino-acid biosynthesis; L-histidine biosynthesis; L-histidine from 5-phospho-alpha-D-ribose 1-diphosphate: step 4/9. Its pathway is amino-acid biosynthesis; L-tryptophan biosynthesis; L-tryptophan from chorismate: step 3/5. Involved in both the histidine and tryptophan biosynthetic pathways. The chain is Phosphoribosyl isomerase A from Mycobacteroides abscessus (strain ATCC 19977 / DSM 44196 / CCUG 20993 / CIP 104536 / JCM 13569 / NCTC 13031 / TMC 1543 / L948) (Mycobacterium abscessus).